The following is a 260-amino-acid chain: MIPPNASLVKYDNPVLVSRNTEKKTPRARALKTSPQQPTNAGPVPNPPPKGGSKLPPVESQKAQQTDEILNSILPPREWTESGQLWVQQVSSTPATRLDVVNLQEQLDMRLQQRQARETGICPVRRELYSQCFDELIRQVTIECAERGLLLLRVRDEIRMTIAAYQTLYESSVAFGMRKALQAEQGKSDMEKKITDLGQEKRELERQVNELKAKCEAIEKREAERRQVEEKKHAEEIQFLKRTNQQLKTQLEGIIAPNKK.

Residues 1–66 (MIPPNASLVK…PVESQKAQQT (66 aa)) form a disordered region. Residues 177 to 260 (MRKALQAEQG…LEGIIAPNKK (84 aa)) are a coiled coil.

It belongs to the inner dynein arm light chain family. Post-translationally, may undergo some post-translational modifications that shift its mobility on SDS gels.

May play a dynamic role in flagellar motility. This chain is 33 kDa inner dynein arm light chain, axonemal, found in Strongylocentrotus purpuratus (Purple sea urchin).